Reading from the N-terminus, the 146-residue chain is Snaclec coagulation factor IX/factor X-binding protein subunit B (146 aa).

A signal peptide spans 1–23; it reads MGRFIFLSFGLLVVFLSLSGTGA. Disulfide bonds link C25/C36, C53/C142, and C119/C134. A C-type lectin domain is found at 32-143; the sequence is YEGHCYKPFN…CRMEAYFVCE (112 aa). Positions 64 and 70 each coordinate Ca(2+). E143 provides a ligand contact to Ca(2+).

The protein belongs to the snaclec family. As to quaternary structure, heterodimer with subunit A of IX/X-bp or IX-bp; disulfide-linked. In terms of tissue distribution, expressed by the venom gland.

Its subcellular location is the secreted. In terms of biological role, when linked to subunit A of IX/X-bp, anticoagulant protein which binds to the gamma-carboxyglutamic acid-domain regions of factors IX (F9) and factor X (F10) in the presence of calcium with a 1 to 1 stoichiometry. When linked to subunit A of IX-bp, anticoagulant protein which binds to the gamma-carboxyglutamic acid-domain regions of factor IX (but not to factor X) in the presence of calcium with a 1 to 1 stoichiometry. This Gloydius halys (Chinese water mocassin) protein is Snaclec coagulation factor IX/factor X-binding protein subunit B.